The sequence spans 461 residues: Acetylcholine receptor subunit alpha (461 aa).

An N-terminal signal peptide occupies residues 1–24 (MILCSYWHVGLVLLLFSCCGLVLG). Residues 25-234 (SEHETRLVAN…ITYHFIMQRI (210 aa)) lie on the Extracellular side of the membrane. 2 disulfide bridges follow: cysteine 152/cysteine 166 and cysteine 216/cysteine 217. N-linked (GlcNAc...) asparagine glycosylation occurs at asparagine 165. 3 consecutive transmembrane segments (helical) span residues 235-259 (PLYF…VFYL), 267-285 (MTLS…LVIV), and 301-320 (YMLF…VVVI). The Cytoplasmic portion of the chain corresponds to 321–432 (NTHHRSPSTH…WKYVAMVIDH (112 aa)). Residues 433–451 (ILLCVFMLICIIGTVSVFA) form a helical membrane-spanning segment.

The protein belongs to the ligand-gated ion channel (TC 1.A.9) family. Acetylcholine receptor (TC 1.A.9.1) subfamily. Alpha-1/CHRNA1 sub-subfamily. Pentamer of two alpha chains, and one each of the beta, delta, and gamma chains.

Its subcellular location is the postsynaptic cell membrane. The protein resides in the cell membrane. It catalyses the reaction K(+)(in) = K(+)(out). The enzyme catalyses Na(+)(in) = Na(+)(out). Its function is as follows. Upon acetylcholine binding, the AChR responds by an extensive change in conformation that affects all subunits and leads to opening of an ion-conducting channel across the plasma membrane. The sequence is that of Acetylcholine receptor subunit alpha (CHRNA1) from Torpedo marmorata (Marbled electric ray).